The chain runs to 691 residues: Cyclic nucleotide-gated channel alpha-1 (691 aa).

At 1-168 (MKKNIINTWY…PAGNMYYNWL (168 aa)) the chain is on the cytoplasmic side. The tract at residues 31 to 151 (ENGARSSFSD…KGKDKKEEEK (121 aa)) is disordered. Residues 39–56 (SDDDGDDDSASMFEESEN) show a composition bias toward acidic residues. 2 stretches are compositionally biased toward basic and acidic residues: residues 57–76 (ETPH…DPSQ) and 112–151 (SKSG…EEEK). The chain crosses the membrane as a helical span at residues 169–190 (FCITLPVMYNWTMVIARACFDE). Over 191–200 (LQSDYLEYWI) the chain is Extracellular. The helical transmembrane segment at 201–221 (IFDYLSDIVYLLDMFVRTRTG) threads the bilayer. Over 222–246 (YLEQGLLVREEAKLIEKYKSNLQFK) the chain is Cytoplasmic. The chain crosses the membrane as a helical span at residues 247–265 (LDFLSVIPTDLLYFKLGWN). Topologically, residues 266–270 (YPEIR) are extracellular. The chain crosses the membrane as a helical span at residues 271-289 (LNRLLRISRMFEFFQRTET). The Cytoplasmic portion of the chain corresponds to 290–296 (RTNYPNI). Residues 294 to 402 (PNIFRISNLV…GNIGSMISNM (109 aa)) form an ion conduction pathway region. A helical membrane pass occupies residues 297–320 (FRISNLVMYIVIIIHWNACVYFSI). Over 321–343 (SKAIGFGNDTWVYPDVNDPEFGR) the chain is Extracellular. N-linked (GlcNAc...) asparagine glycosylation is present at Asn-328. The next 2 helical transmembrane spans lie at 344-378 (LARK…VFVV) and 379-403 (VDFL…SNMN). The selectivity filter stretch occupies residues 361-364 (TIGE). A C-linker region spans residues 404–480 (AARAEFQARI…DTLKKVRIFA (77 aa)). The Cytoplasmic segment spans residues 404–691 (AARAEFQARI…ESRPLDSTQD (288 aa)). The cyclic nucleotide-binding domain stretch occupies residues 484–604 (AGLLVELVLK…EEKGKQILMK (121 aa)). Residues Gly-544, Ser-547, Arg-560, and Thr-561 each coordinate 3',5'-cyclic GMP. Positions 560 and 561 each coordinate 3',5'-cyclic AMP. A coiled-coil region spans residues 622-676 (LEEKVTRMEGSVDLLQTRFARILAEYESMQQKLKQRLTKVERFLKPIIDTEFSAL).

It belongs to the cyclic nucleotide-gated cation channel (TC 1.A.1.5) family. CNGA1 subfamily. Forms heterotetrameric channels composed of CNGA1 and CNGB1 subunits with 3:1 stoichiometry. May also form cyclic nucleotide-activated homotetrameric channels, that are efficiently activated by saturating cGMP, but poorly activated by saturating cAMP compared to the heterotetramer with CNGB1. The channel binds Ca(2+)-bound CALM1 via CaM1 and CaM2 regions of the CNGB1 subunit; this interaction modulates the affinity of the channel for cNMPs in response to intracellular Ca(2+) levels.

It is found in the cell membrane. It carries out the reaction Ca(2+)(in) = Ca(2+)(out). The catalysed reaction is Na(+)(in) = Na(+)(out). The enzyme catalyses K(+)(in) = K(+)(out). It catalyses the reaction NH4(+)(in) = NH4(+)(out). It carries out the reaction Rb(+)(in) = Rb(+)(out). The catalysed reaction is Li(+)(in) = Li(+)(out). The enzyme catalyses Cs(+)(in) = Cs(+)(out). Its function is as follows. Pore-forming subunit of the rod cyclic nucleotide-gated channel. Mediates rod photoresponses at dim light converting transient changes in intracellular cGMP levels into electrical signals. In the dark, cGMP levels are high and keep the channel open enabling a steady inward current carried by Na(+) and Ca(2+) ions that leads to membrane depolarization and neurotransmitter release from synaptic terminals. Upon photon absorption cGMP levels decline leading to channel closure and membrane hyperpolarization that ultimately slows neurotransmitter release and signals the presence of light, the end point of the phototransduction cascade. Conducts cGMP- and cAMP-gated ion currents, with permeability for monovalent and divalent cations. The selectivity for Ca(2+) over Na(+) increases with cGMP concentrations, whereas the selectivity among monovalent ions is independent of the cGMP levels. The protein is Cyclic nucleotide-gated channel alpha-1 of Canis lupus familiaris (Dog).